The primary structure comprises 280 residues: Adenosylcobinamide-GDP ribazoletransferase (280 aa).

Transmembrane regions (helical) follow at residues G44–L64, S69–F89, L111–L131, V135–V155, I189–I209, and A226–A246.

Belongs to the CobS family. Requires Mg(2+) as cofactor.

The protein resides in the cell inner membrane. The enzyme catalyses alpha-ribazole + adenosylcob(III)inamide-GDP = adenosylcob(III)alamin + GMP + H(+). It catalyses the reaction alpha-ribazole 5'-phosphate + adenosylcob(III)inamide-GDP = adenosylcob(III)alamin 5'-phosphate + GMP + H(+). The protein operates within cofactor biosynthesis; adenosylcobalamin biosynthesis; adenosylcobalamin from cob(II)yrinate a,c-diamide: step 7/7. Its function is as follows. Joins adenosylcobinamide-GDP and alpha-ribazole to generate adenosylcobalamin (Ado-cobalamin). Also synthesizes adenosylcobalamin 5'-phosphate from adenosylcobinamide-GDP and alpha-ribazole 5'-phosphate. The polypeptide is Adenosylcobinamide-GDP ribazoletransferase (Albidiferax ferrireducens (strain ATCC BAA-621 / DSM 15236 / T118) (Rhodoferax ferrireducens)).